The following is a 330-amino-acid chain: Phosphate acyltransferase (330 aa).

The protein belongs to the PlsX family. Homodimer. Probably interacts with PlsY.

It localises to the cytoplasm. It carries out the reaction a fatty acyl-[ACP] + phosphate = an acyl phosphate + holo-[ACP]. The protein operates within lipid metabolism; phospholipid metabolism. In terms of biological role, catalyzes the reversible formation of acyl-phosphate (acyl-PO(4)) from acyl-[acyl-carrier-protein] (acyl-ACP). This enzyme utilizes acyl-ACP as fatty acyl donor, but not acyl-CoA. In Streptococcus pneumoniae (strain JJA), this protein is Phosphate acyltransferase.